Here is a 62-residue protein sequence, read N- to C-terminus: Photosystem II reaction center protein Z (62 aa).

2 helical membrane-spanning segments follow: residues 8-28 (AVFALIATSSILLISVPVVFA) and 41-61 (FSGTSLWIGLVFLVGILNSLI).

This sequence belongs to the PsbZ family. PSII is composed of 1 copy each of membrane proteins PsbA, PsbB, PsbC, PsbD, PsbE, PsbF, PsbH, PsbI, PsbJ, PsbK, PsbL, PsbM, PsbT, PsbY, PsbZ, Psb30/Ycf12, at least 3 peripheral proteins of the oxygen-evolving complex and a large number of cofactors. It forms dimeric complexes.

It localises to the plastid. Its subcellular location is the chloroplast thylakoid membrane. Functionally, may control the interaction of photosystem II (PSII) cores with the light-harvesting antenna, regulates electron flow through the 2 photosystem reaction centers. PSII is a light-driven water plastoquinone oxidoreductase, using light energy to abstract electrons from H(2)O, generating a proton gradient subsequently used for ATP formation. The chain is Photosystem II reaction center protein Z from Nymphaea alba (White water-lily).